Consider the following 249-residue polypeptide: UPF0309 protein GTNG_1302 (249 aa).

Residues 31 to 214 (VSKAVQNGGI…ALMAENGVEP (184 aa)) enclose the SIS domain.

Belongs to the UPF0309 family.

The polypeptide is UPF0309 protein GTNG_1302 (Geobacillus thermodenitrificans (strain NG80-2)).